A 211-amino-acid polypeptide reads, in one-letter code: Ribosomal RNA small subunit methyltransferase G (211 aa).

Residues Gly-74, Leu-79, 125-126 (AE), and Arg-140 each bind S-adenosyl-L-methionine.

This sequence belongs to the methyltransferase superfamily. RNA methyltransferase RsmG family.

It localises to the cytoplasm. Functionally, specifically methylates the N7 position of guanine in position 518 of 16S rRNA. This Clavibacter sepedonicus (Clavibacter michiganensis subsp. sepedonicus) protein is Ribosomal RNA small subunit methyltransferase G.